The sequence spans 740 residues: MPLAQLADPWQKMAVESPSDSAENGQQIMDEPMGEEEINPQTEEGSIKEIAITHHVKEGHEKADPSQFELLKVLGQGSFGKVFLVKKISGSDARQLYAMKVLKKATLKVRDRVRTKMERDILVEVNHPFIVKLHYAFQTEGKLYLILDFLRGGDLFTRLSKEVMFTEEDVKFYLAELALALDHLHSLGIIYRDLKPENILLDEEGHIKLTDFGLSKESIDHEKKAYSFCGTVEYMAPEVVNRRGHTQSADWWSFGVLMFEMLTGTLPFQGKDRKETMTMILKAKLGMPQFLSPEAQSLLRMLFKRNPANRLGAGPDGVEEIKRHSFFSTIDWNKLYRREIHPPFKPATGRPEDTFYFDPEFTAKTPKDSPGIPPSANAHQLFRGFSFVAITSDDESQAMQTVGVHSIVQQLHRNSIQFTDGYEVKEDIGVGSYSVCKRCIHKATNMEFAVKIIDKSKRDPTEEIEILLRYGQHPNIITLKDVYDDGKYVYVVTELMKGGELLDKILRQKFFSEREASAVLFTITKTVEYLHAQGVVHRDLKPSNILYVDESGNPESIRICDFGFAKQLRAENGLLMTPCYTANFVAPEVLKRQGYDAACDIWSLGVLLYTMLTGYTPFANGPDDTPEEILARIGSGKFSLSGGYWNSVSDTAKDLVSKMLHVDPHQRLTAALVLRHPWIVHWDQLPQYQLNRQDAPHLVKGAMAATYSALNRNQSPVLEPVGRSTLAQRRGIKKITSTAL.

The tract at residues 1-26 (MPLAQLADPWQKMAVESPSDSAENGQ) is disordered. Positions 68–327 (FELLKVLGQG…VEEIKRHSFF (260 aa)) constitute a Protein kinase 1 domain. Residues 74–82 (LGQGSFGKV) and lysine 100 each bind ATP. Residue aspartate 193 is the Proton acceptor of the active site. Phosphoserine; by PDPK1 is present on serine 227. An AGC-kinase C-terminal domain is found at 328–397 (STIDWNKLYR…VAITSDDESQ (70 aa)). Threonine 365 carries the post-translational modification Phosphothreonine. Serine 369 and serine 375 each carry phosphoserine. Phosphoserine; by autocatalysis and MAPKAPK2 is present on serine 386. Serine 415 bears the Phosphoserine mark. The region spanning 422 to 679 (YEVKEDIGVG…AALVLRHPWI (258 aa)) is the Protein kinase 2 domain. ATP-binding positions include 428–436 (IGVGSYSVC) and lysine 451. Tyrosine 529 bears the Phosphotyrosine; by FGFR3 mark. The active-site Proton acceptor is aspartate 539. Phosphoserine is present on residues serine 556 and serine 715.

Belongs to the protein kinase superfamily. AGC Ser/Thr protein kinase family. S6 kinase subfamily. In terms of assembly, forms a complex with either MAPK1/ERK2 or MAPK3/ERK1 in quiescent cells. Transiently dissociates following mitogenic stimulation. Interacts with NFATC4, ETV1/ER81 and FGFR1. Requires Mg(2+) as cofactor. In terms of processing, activated by phosphorylation at Ser-227 by PDPK1. Autophosphorylated on Ser-386, as part of the activation process. May be phosphorylated at Thr-365 and Ser-369 by MAPK1/ERK2 and MAPK3/ERK1. Can also be activated via phosphorylation at Ser-386 by MAPKAPK2. N-terminal myristoylation results in an activated kinase in the absence of added growth factors. In terms of tissue distribution, intestine, thymus, lung, heart and brain.

It localises to the nucleus. The protein localises to the cytoplasm. The catalysed reaction is L-seryl-[protein] + ATP = O-phospho-L-seryl-[protein] + ADP + H(+). It catalyses the reaction L-threonyl-[protein] + ATP = O-phospho-L-threonyl-[protein] + ADP + H(+). Its activity is regulated as follows. Upon extracellular signal or mitogen stimulation, phosphorylated at Thr-577 in the C-terminal kinase domain (CTKD) by MAPK1/ERK2 and MAPK3/ERK1. The activated CTKD then autophosphorylates Ser-386, allowing binding of PDPK1, which in turn phosphorylates Ser-227 in the N-terminal kinase domain (NTDK) leading to the full activation of the protein and subsequent phosphorylation of the substrates by the NTKD. Serine/threonine-protein kinase that acts downstream of ERK (MAPK1/ERK2 and MAPK3/ERK1) signaling and mediates mitogenic and stress-induced activation of the transcription factors CREB1, ETV1/ER81 and NR4A1/NUR77, regulates translation through RPS6 and EIF4B phosphorylation, and mediates cellular proliferation, survival, and differentiation by modulating mTOR signaling and repressing pro-apoptotic function of BAD and DAPK1. In fibroblast, is required for EGF-stimulated phosphorylation of CREB1 and histone H3 at 'Ser-10', which results in the subsequent transcriptional activation of several immediate-early genes. In response to mitogenic stimulation (EGF and PMA), phosphorylates and activates NR4A1/NUR77 and ETV1/ER81 transcription factors and the cofactor CREBBP. Upon insulin-derived signal, acts indirectly on the transcription regulation of several genes by phosphorylating GSK3B at 'Ser-9' and inhibiting its activity. Phosphorylates RPS6 in response to serum or EGF via an mTOR-independent mechanism and promotes translation initiation by facilitating assembly of the preinitiation complex. In response to insulin, phosphorylates EIF4B, enhancing EIF4B affinity for the EIF3 complex and stimulating cap-dependent translation. Is involved in the mTOR nutrient-sensing pathway by directly phosphorylating TSC2 at 'Ser-1798', which potently inhibits TSC2 ability to suppress mTOR signaling, and mediates phosphorylation of RPTOR, which regulates mTORC1 activity and may promote rapamycin-sensitive signaling independently of the PI3K/AKT pathway. Mediates cell survival by phosphorylating the pro-apoptotic proteins BAD and DAPK1 and suppressing their pro-apoptotic function. Promotes the survival of hepatic stellate cells by phosphorylating CEBPB in response to the hepatotoxin carbon tetrachloride (CCl4). Is involved in cell cycle regulation by phosphorylating the CDK inhibitor CDKN1B, which promotes CDKN1B association with 14-3-3 proteins and prevents its translocation to the nucleus and inhibition of G1 progression. In LPS-stimulated dendritic cells, is involved in TLR4-induced macropinocytosis, and in myeloma cells, acts as effector of FGFR3-mediated transformation signaling, after direct phosphorylation at Tyr-529 by FGFR3. Negatively regulates EGF-induced MAPK1/3 phosphorylation via phosphorylation of SOS1. Phosphorylates SOS1 at 'Ser-1134' and 'Ser-1161' that create YWHAB and YWHAE binding sites and which contribute to the negative regulation of MAPK1/3 phosphorylation. Phosphorylates EPHA2 at 'Ser-897', the RPS6KA-EPHA2 signaling pathway controls cell migration. Acts as a regulator of osteoblast differentiation by mediating phosphorylation of ATF4, thereby promoting ATF4 transactivation activity. The sequence is that of Ribosomal protein S6 kinase alpha-3 (Rps6ka3) from Mus musculus (Mouse).